Consider the following 512-residue polypeptide: UDP-N-acetylmuramate--L-alanine ligase (512 aa).

Residue 132–138 (GAHGKTT) coordinates ATP.

It belongs to the MurCDEF family.

Its subcellular location is the cytoplasm. It catalyses the reaction UDP-N-acetyl-alpha-D-muramate + L-alanine + ATP = UDP-N-acetyl-alpha-D-muramoyl-L-alanine + ADP + phosphate + H(+). It functions in the pathway cell wall biogenesis; peptidoglycan biosynthesis. Its function is as follows. Cell wall formation. In Bifidobacterium longum (strain DJO10A), this protein is UDP-N-acetylmuramate--L-alanine ligase.